The primary structure comprises 596 residues: Endoribonuclease ZC3H12A (596 aa).

Disordered stretches follow at residues 1–48 (MSDP…TSEL) and 97–134 (QALT…EGSD). Over residues 10 to 19 (VQESNPTMSL) the composition is skewed to polar residues. The interval 42–87 (EAPTSELQMKVDFFRKLGYSSSEIHSVLQKLGVQADTNTVLGELVK) is ubiquitin association domain. The tract at residues 81–150 (VLGELVKHGS…DGSNVAMSHG (70 aa)) is necessary for interaction with TANK. An RNase region spans residues 112–281 (GGSTPKPSTL…DKFMPPDDPL (170 aa)). An RNase NYN domain is found at 135–290 (LRPVVIDGSN…LGRHGPSLDN (156 aa)). The RNA binding stretch occupies residues 214–220 (RRVGGKR). A Mg(2+)-binding site is contributed by aspartate 226. Disordered stretches follow at residues 278–306 (DDPL…KQPC) and 340–417 (NALL…PTEW). A C3H1-type zinc finger spans residues 301–324 (HRKQPCPYGKKCTYGIKCRFFHPE). The interval 301–454 (HRKQPCPYGK…SELWGVRGGS (154 aa)) is necessary for interaction with ZC3H12D. Phosphoserine is present on serine 344. Low complexity predominate over residues 356–368 (QRPSPASQSSSVS). Phosphoserine occurs at positions 435 and 439. Residues 511–543 (YWSEPYPLPPPTPVLQEPQRPSPGAGGGPWGRV) form a disordered region. The segment covering 524–533 (VLQEPQRPSP) has biased composition (low complexity).

The protein belongs to the ZC3H12 family. Oligomer. Found in a deubiquitination complex with TANK, USP10 and ZC3H12A; this complex inhibits genotoxic stress- or interleukin-1-beta-mediated NF-kappaB activation by promoting IKBKG or TRAF6 deubiquitination. Interacts with IKBKG; this interaction increases in response to DNA damage. Interacts with TANK; this interaction increases in response to DNA damage and serves as a bridge to anchor both TANK and USP10 into a deubiquitinating complex. Interacts with TRAF6; this interaction increases in response to DNA damage and is stimulated by TANK. Interacts with USP10; this interaction increases in response to DNA damage and serves as a bridge to anchor both TANK and USP10 into a deubiquitinating complex. Interacts with ZC3H12D. Interacts with TNRC6A. Interacts with IKBKB/IKKB. Interacts with IKBKB/IKKB. Interacts with IKBKB/IKKB. Interacts with BTRC; the interaction occurs when ZC3H12A is phosphorylated in a IKBKB/IKKB-dependent manner. Interacts with IRAK1; this interaction increases the interaction between ZC3H12A and IKBKB/IKKB. Interacts with UPF1; this interaction occurs in a mRNA translationally active- and termination-dependent manner and is essential for ZC3H12A-mediated degradation of target mRNAs. Associates with ribosomes. Interacts with ubiquitin. Mg(2+) is required as a cofactor. In terms of processing, proteolytically cleaved between Arg-111 and Arg-214 by MALT1 in activated T-cells; cleavage at Arg-111 is critical for promoting ZC3H12A degradation in response to T-cell receptor (TCR) stimulation, and hence is necessary for prolonging the stability of a set of mRNAs controlling T-cell activation and Th17 cell differentiation. Phosphorylated by IRAK1; phosphorylation is necessary for subsequent phosphorylation by the I-kappa-B-kinase (IKK) complex. Phosphorylated by I-kappa-B-kinases (IKKs) at Ser-435 and Ser-439 upon lipopolysaccharide (LPS) or IL1B stimulation in macrophages through the MyD88-dependent signaling pathway; these phosphorylations promote rapid ubiquitin proteasome-mediated degradation of ZC3H12A in macrophages and hence allows its target mRNAs, such as IL6, to escape from degradation and accumulate during the inflammatory response. Post-translationally, ubiquitinated; ubiquitination is induced in response to interleukin IL1 receptor stimuli in a IKBKB/IKKB and IRAK1-dependent manner, leading to proteasome-mediated degradation. As to expression, expressed in CD4(+) helper T-cells (at protein level). Highly expressed in macrophages. Expressed in lung, lymph nodes, spleen and thymus. Expressed weakly in heart. Expressed weakly in cardiomyocytes (at protein level). Expressed in spleen, lung, intestine, brown adipose tissue and thymus. Weakly expressed in the heart. Weakly expressed in cardiomyocytes.

Its subcellular location is the nucleus. It is found in the cytoplasm. It localises to the rough endoplasmic reticulum membrane. The protein resides in the cytoplasmic granule. The protein localises to the P-body. In terms of biological role, endoribonuclease involved in various biological functions such as cellular inflammatory response and immune homeostasis, glial differentiation of neuroprogenitor cells, cell death of cardiomyocytes, adipogenesis and angiogenesis. Functions as an endoribonuclease involved in mRNA decay. Modulates the inflammatory response by promoting the degradation of a set of translationally active cytokine-induced inflammation-related mRNAs, such as IL6 and IL12B, during the early phase of inflammation. Prevents aberrant T-cell-mediated immune reaction by degradation of multiple mRNAs controlling T-cell activation, such as those encoding cytokines (IL6 and IL2), cell surface receptors (ICOS, TNFRSF4 and TNFR2) and transcription factor (REL). Inhibits cooperatively with ZC3H12A the differentiation of helper T cells Th17 in lungs. They repress target mRNA encoding the Th17 cell-promoting factors IL6, ICOS, REL, IRF4, NFKBID and NFKBIZ. The cooperation requires RNA-binding by RC3H1 and the nuclease activity of ZC3H12A. Together with RC3H1, destabilizes TNFRSF4/OX40 mRNA by binding to the conserved stem loop structure in its 3'UTR. Self regulates by destabilizing its own mRNA. Cleaves mRNA harboring a stem-loop (SL), often located in their 3'-UTRs, during the early phase of inflammation in a helicase UPF1-dependent manner. Plays a role in the inhibition of microRNAs (miRNAs) biogenesis. Cleaves the terminal loop of a set of precursor miRNAs (pre-miRNAs) important for the regulation of the inflammatory response leading to their degradation, and thus preventing the biosynthesis of mature miRNAs. Also plays a role in promoting angiogenesis in response to inflammatory cytokines by inhibiting the production of antiangiogenic microRNAs via its anti-dicer RNase activity. Affects the overall ubiquitination of cellular proteins. Positively regulates deubiquitinase activity promoting the cleavage at 'Lys-48'- and 'Lys-63'-linked polyubiquitin chains on TNF receptor-associated factors (TRAFs), preventing JNK and NF-kappa-B signaling pathway activation, and hence negatively regulating macrophage-mediated inflammatory response and immune homeostasis. Induces also deubiquitination of the transcription factor HIF1A, probably leading to its stabilization and nuclear import, thereby positively regulating the expression of proangiogenic HIF1A-targeted genes. Involved in a TANK-dependent negative feedback response to attenuate NF-kappaB activation through the deubiquitination of IKBKG or TRAF6 in response to interleukin-1-beta (IL1B) stimulation or upon DNA damage. Prevents stress granules (SGs) formation and promotes macrophage apoptosis under stress conditions, including arsenite-induced oxidative stress, heat shock, and energy deprivation. Plays a role in the regulation of macrophage polarization; promotes IL4-induced polarization of macrophages M1 into anti-inflammatory M2 state. May also act as a transcription factor that regulates the expression of multiple genes involved in inflammatory response, angiogenesis, adipogenesis and apoptosis. Functions as a positive regulator of glial differentiation of neuroprogenitor cells through an amyloid precursor protein (APP)-dependent signaling pathway. Attenuates septic myocardial contractile dysfunction in response to lipopolysaccharide (LPS) by reducing I-kappa-B-kinase (IKK)-mediated NF-kappa-B activation, and hence myocardial pro-inflammatory cytokine production. The sequence is that of Endoribonuclease ZC3H12A from Mus musculus (Mouse).